The primary structure comprises 968 residues: RNA polymerase-associated protein RapA (968 aa).

A Helicase ATP-binding domain is found at 164 to 334; it reads DVGRRHAPRV…FARLRLLDPN (171 aa). 177–184 is a binding site for ATP; the sequence is DEVGLGKT. Positions 280-283 match the DEAH box motif; sequence DEAH. The Helicase C-terminal domain occupies 490 to 644; sequence RVEWLMGYLT…TCPTGRTVYD (155 aa).

It belongs to the SNF2/RAD54 helicase family. RapA subfamily. In terms of assembly, interacts with the RNAP. Has a higher affinity for the core RNAP than for the holoenzyme. Its ATPase activity is stimulated by binding to RNAP.

Functionally, transcription regulator that activates transcription by stimulating RNA polymerase (RNAP) recycling in case of stress conditions such as supercoiled DNA or high salt concentrations. Probably acts by releasing the RNAP, when it is trapped or immobilized on tightly supercoiled DNA. Does not activate transcription on linear DNA. Probably not involved in DNA repair. The sequence is that of RNA polymerase-associated protein RapA from Klebsiella pneumoniae (strain 342).